The following is a 477-amino-acid chain: Nuclear receptor subfamily 6 group A member 1-A (477 aa).

The segment at residues 40-115 is a DNA-binding region (nuclear receptor); the sequence is QRSCLICGDR…MGMNRKAIRE (76 aa). 2 NR C4-type zinc fingers span residues 43-63 and 79-98; these read CLIC…CEGC and CSRD…CQYC. The disordered stretch occupies residues 147-187; that stretch reads DEANMPEHTWGNNGDSDHSSPGNGVSDGNQPSPVSTLSSNR. Residues 156–187 show a composition bias toward polar residues; sequence WGNNGDSDHSSPGNGVSDGNQPSPVSTLSSNR. The NR LBD domain occupies 230–461; that stretch reads QSHTLIGQLV…HSCKSSLSSY (232 aa).

It belongs to the nuclear hormone receptor family. NR6 subfamily. In terms of assembly, homodimer. Expressed in germ cells, being predominant in previtellogenic oocytes in the ovary and in spermatocytes in the testis.

It localises to the nucleus. In terms of biological role, probable orphan nuclear receptor. Binds to a response element containing repeats of the motif 5'-AGGTCA-3'. The protein is Nuclear receptor subfamily 6 group A member 1-A of Danio rerio (Zebrafish).